The primary structure comprises 365 residues: Deoxyguanosinetriphosphate triphosphohydrolase-like protein (365 aa).

An HD domain is found at Arg-52–Val-187.

It belongs to the dGTPase family. Type 2 subfamily.

This is Deoxyguanosinetriphosphate triphosphohydrolase-like protein from Wolinella succinogenes (strain ATCC 29543 / DSM 1740 / CCUG 13145 / JCM 31913 / LMG 7466 / NCTC 11488 / FDC 602W) (Vibrio succinogenes).